Reading from the N-terminus, the 347-residue chain is MTAQHTILKIRRPDDWHIHLRDDRMLETVLPYTSRFFGRAIVMPNLTPPITSVASAIAYRQRILAAVPQGDNFHPLMTCYLTDTLDANEIVSGFEQGVFTAAKLYPANATTNSSHGVTSVATISGILEKMQKIGMPLLIHGEVTDPAIDIFDREARFIETILEPLRQDFPELKVVLEHITTKEAAEYVIAGNDYLAATITPQHLMFNRNHMLVGGIRTHLYCLPILKRNTHQQALREAVASGCDRLFLGTDSAPHAKHRKESSCGCAGVFNAQAALSTYATVFEEMNALDKLEAFCSLNGPRFYGLPVNDSWIELHREAVTFPEEIALGDESLIPFLAGQSLNWSVR.

Zn(2+) contacts are provided by His-17 and His-19. Residues 19–21 (HLR) and Asn-45 contribute to the substrate site. Lys-103, His-140, and His-178 together coordinate Zn(2+). Lys-103 carries the N6-carboxylysine modification. A substrate-binding site is contributed by His-140. Leu-223 lines the substrate pocket. Position 251 (Asp-251) interacts with Zn(2+). Asp-251 is an active-site residue. The substrate site is built by His-255 and Ala-267.

It belongs to the metallo-dependent hydrolases superfamily. DHOase family. Class II DHOase subfamily. Homodimer. Zn(2+) is required as a cofactor.

It carries out the reaction (S)-dihydroorotate + H2O = N-carbamoyl-L-aspartate + H(+). Its pathway is pyrimidine metabolism; UMP biosynthesis via de novo pathway; (S)-dihydroorotate from bicarbonate: step 3/3. In terms of biological role, catalyzes the reversible cyclization of carbamoyl aspartate to dihydroorotate. The sequence is that of Dihydroorotase from Pectobacterium atrosepticum (strain SCRI 1043 / ATCC BAA-672) (Erwinia carotovora subsp. atroseptica).